Reading from the N-terminus, the 110-residue chain is HTH-type transcriptional regulator TnrA (110 aa).

An HTH merR-type domain is found at 13-81 (VISIGIVSEL…TAEILKDMRK (69 aa)). Residues 16–35 (IGIVSELTGLSVRQIRYYEE) constitute a DNA-binding region (H-T-H motif).

In terms of assembly, homodimer. Under conditions of nitrogen excess, TnrA forms a stable complex with feedback-inhibited GlnA. Interacts with GlnK-AmtB complex.

Its subcellular location is the cell membrane. Under conditions of nitrogen excess, the DNA-binding activity is inhibited by the formation of a stable complex with feedback-inhibited GlnA. The presence of glutamine and AMP increases the inhibitory activity of glutamine synthetase by more than 1000-fold. Functionally, transcription regulator that actives the transcription of genes required for nitrogen assimilation such as nrgAB (ammonium transport), nasABCDEF (nitrate/nitrite assimilation), ureABC (urea degradation) and gabP (GABA transport), during nitrogen limitation. Also represses glnRA and gltAB in the absence of ammonium. On the contrary of the MerR members, which require longer DNA sites for high-affinity binding, TnrA requires a DNA sequence of 17 nucleotides as minimal binding site. This Bacillus subtilis (strain 168) protein is HTH-type transcriptional regulator TnrA.